We begin with the raw amino-acid sequence, 259 residues long: Phosphatidylglycerol--prolipoprotein diacylglyceryl transferase (259 aa).

4 consecutive transmembrane segments (helical) span residues 12-32, 46-66, 83-103, and 109-129; these read LSLHWYAVCILVGLLLAVYLA, IIDFILIAFPLAIIGARIYYV, IWNGGIAIYGGLITGTIVLFV, and VLNPIHFLDIAAPSVMLAQAI. Arg-131 contacts a 1,2-diacyl-sn-glycero-3-phospho-(1'-sn-glycerol). 3 helical membrane passes run 167 to 187, 194 to 214, and 226 to 246; these read VPTFLYESMWNLIGFVIIMVW, LLDGDILSFYLIWYGCGRLVI, and GIRVSQYVSVLLIVIAIVFIF.

Belongs to the Lgt family.

Its subcellular location is the cell membrane. The catalysed reaction is L-cysteinyl-[prolipoprotein] + a 1,2-diacyl-sn-glycero-3-phospho-(1'-sn-glycerol) = an S-1,2-diacyl-sn-glyceryl-L-cysteinyl-[prolipoprotein] + sn-glycerol 1-phosphate + H(+). Its pathway is protein modification; lipoprotein biosynthesis (diacylglyceryl transfer). In terms of biological role, catalyzes the transfer of the diacylglyceryl group from phosphatidylglycerol to the sulfhydryl group of the N-terminal cysteine of a prolipoprotein, the first step in the formation of mature lipoproteins. This is Phosphatidylglycerol--prolipoprotein diacylglyceryl transferase from Streptococcus equi subsp. zooepidemicus (strain MGCS10565).